A 237-amino-acid chain; its full sequence is Large ribosomal subunit protein uL1 (237 aa).

This sequence belongs to the universal ribosomal protein uL1 family. Part of the 50S ribosomal subunit.

Functionally, binds directly to 23S rRNA. The L1 stalk is quite mobile in the ribosome, and is involved in E site tRNA release. Protein L1 is also a translational repressor protein, it controls the translation of the L11 operon by binding to its mRNA. This chain is Large ribosomal subunit protein uL1, found in Thermosynechococcus vestitus (strain NIES-2133 / IAM M-273 / BP-1).